The primary structure comprises 513 residues: Probable cytosol aminopeptidase (513 aa).

Residues K277 and D282 each contribute to the Mn(2+) site. K289 is a catalytic residue. The Mn(2+) site is built by D300, D359, and E361. The active site involves R363.

It belongs to the peptidase M17 family. Mn(2+) serves as cofactor.

Its subcellular location is the cytoplasm. The enzyme catalyses Release of an N-terminal amino acid, Xaa-|-Yaa-, in which Xaa is preferably Leu, but may be other amino acids including Pro although not Arg or Lys, and Yaa may be Pro. Amino acid amides and methyl esters are also readily hydrolyzed, but rates on arylamides are exceedingly low.. It carries out the reaction Release of an N-terminal amino acid, preferentially leucine, but not glutamic or aspartic acids.. Presumably involved in the processing and regular turnover of intracellular proteins. Catalyzes the removal of unsubstituted N-terminal amino acids from various peptides. This Mycobacterium sp. (strain KMS) protein is Probable cytosol aminopeptidase.